A 430-amino-acid chain; its full sequence is MKLQKPKGTADLLPAETAKWQYIEEIARGVFNDYNFKEIRTPMFESYELFSRATGETSDIVTKEMYDFEDKGGRHIALRPEGTASAVRAYIENKLYAPEVVKPVKLWYDAPMFRYERPQSGRLRQFHQFGVECLGVKNPAVDVEIIAMADTLFRQLGITGLKLALNTLGDMESRMAYRQALIDYLTPFENQLSEDSRRRLNENPLRVLDSKEAEDIAIVKNAPAILDYLNEASKAYFEEVKALLEALHIEYTIDPNMVRGLDYYNDTIFEFIVDFDGKDLTVCGGGRYDGLVEYFDGPATPAFGFGLGIERLLMIAQKQEINFIPEETLDVYIAVMGEKANLEATKLAESLREQAFKVERDFSNRKLGAQFKTAEKLGAELIITLGEDEIRTGQIKVKHNQTRKQVETTLKAVHESFAPIFEEIYADEEL.

Belongs to the class-II aminoacyl-tRNA synthetase family. Homodimer.

Its subcellular location is the cytoplasm. It carries out the reaction tRNA(His) + L-histidine + ATP = L-histidyl-tRNA(His) + AMP + diphosphate + H(+). The protein is Histidine--tRNA ligase of Lactococcus lactis subsp. lactis (strain IL1403) (Streptococcus lactis).